We begin with the raw amino-acid sequence, 282 residues long: Phosphoglycerate mutase-like protein 1 (282 aa).

The Tele-phosphohistidine intermediate role is filled by H23. The active-site Proton donor/acceptor is E135.

The protein belongs to the phosphoglycerate mutase family.

Its function is as follows. May play a role in carbohydrates metabolism. This chain is Phosphoglycerate mutase-like protein 1, found in Arabidopsis thaliana (Mouse-ear cress).